A 274-amino-acid polypeptide reads, in one-letter code: Protein RecA (274 aa).

43–50 (GPESSGKT) serves as a coordination point for ATP.

This sequence belongs to the RecA family.

Its subcellular location is the cytoplasm. Its function is as follows. Can catalyze the hydrolysis of ATP in the presence of single-stranded DNA, the ATP-dependent uptake of single-stranded DNA by duplex DNA, and the ATP-dependent hybridization of homologous single-stranded DNAs. It interacts with LexA causing its activation and leading to its autocatalytic cleavage. This chain is Protein RecA, found in Neisseria polysaccharea.